The sequence spans 673 residues: Translation factor GUF1 homolog, mitochondrial (673 aa).

Positions 68-260 (ERIRNFSIIA…AVIERIPSPP (193 aa)) constitute a tr-type G domain. GTP-binding positions include 77-84 (AHVDHGKS), 153-157 (DTPGH), and 207-210 (NKID).

It belongs to the TRAFAC class translation factor GTPase superfamily. Classic translation factor GTPase family. LepA subfamily.

It localises to the mitochondrion inner membrane. It carries out the reaction GTP + H2O = GDP + phosphate + H(+). Promotes mitochondrial protein synthesis. May act as a fidelity factor of the translation reaction, by catalyzing a one-codon backward translocation of tRNAs on improperly translocated ribosomes. Binds to mitochondrial ribosomes in a GTP-dependent manner. This chain is Translation factor GUF1 homolog, mitochondrial, found in Ricinus communis (Castor bean).